Here is a 259-residue protein sequence, read N- to C-terminus: Putative protein-tyrosine sulfotransferase (259 aa).

Cysteine 13 and cysteine 68 are disulfide-bonded. The Proton donor/acceptor role is filled by glutamate 16. N-linked (GlcNAc...) asparagine glycosylation is present at asparagine 36. 3 residues coordinate 3'-phosphoadenylyl sulfate: arginine 95, serine 103, and arginine 107. Residue asparagine 115 is glycosylated (N-linked (GlcNAc...) asparagine). A disulfide bridge connects residues cysteine 137 and cysteine 144. 3'-phosphoadenylyl sulfate-binding positions include tyrosine 149 and 194–203; that span reads SASQVKNSIN.

The protein belongs to the protein sulfotransferase family.

It catalyses the reaction L-tyrosyl-[protein] + 3'-phosphoadenylyl sulfate = O-sulfo-L-tyrosine-[protein] + adenosine 3',5'-bisphosphate + H(+). Catalyzes the O-sulfation of tyrosine residues within acidic motifs of polypeptides, using 3'-phosphoadenylyl sulfate (PAPS) as cosubstrate. The sequence is that of Putative protein-tyrosine sulfotransferase (tpst-2) from Caenorhabditis elegans.